The primary structure comprises 274 residues: Bis(5'-nucleosyl)-tetraphosphatase, symmetrical (274 aa).

Belongs to the Ap4A hydrolase family.

It carries out the reaction P(1),P(4)-bis(5'-adenosyl) tetraphosphate + H2O = 2 ADP + 2 H(+). Functionally, hydrolyzes diadenosine 5',5'''-P1,P4-tetraphosphate to yield ADP. The sequence is that of Bis(5'-nucleosyl)-tetraphosphatase, symmetrical from Shewanella baltica (strain OS195).